We begin with the raw amino-acid sequence, 1047 residues long: Ras GTPase-activating protein 1 (1047 aa).

Residue methionine 1 is modified to N-acetylmethionine. The region spanning 181–272 (WYHGKLDRTI…LKGEKLLYPV (92 aa)) is the SH2 1 domain. Residues 279–341 (EDRRRVRAIL…VEDLVEEVGR (63 aa)) enclose the SH3 domain. The SH2 2 domain occupies 351-441 (WFHGKISKQE…VEGYYLKEPV (91 aa)). Positions 474–577 (NIVKKGYLLK…WMKGLQAFCN (104 aa)) constitute a PH domain. Residues 577-690 (NLRKSSPGTS…QKGHATDEWF (114 aa)) enclose the C2 domain. Tyrosine 615 carries the phosphotyrosine modification. Residues 764 to 974 (KLESLLLCTL…HRMIMFLDEL (211 aa)) enclose the Ras-GAP domain. Position 831 is a phosphoserine (serine 831).

In terms of assembly, interacts with SQSTM1. Interacts with SPSB1; the interaction does not promote degradation. Interacts with CAV2 (tyrosine phosphorylated form). Directly interacts with NCK1. Interacts with PDGFRB (tyrosine phosphorylated). Interacts (via SH2 domain) with the 'Tyr-9' phosphorylated form of PDPK1. Interacts with tyrosine-phosphorylated EPHB4. The N-terminus is blocked. In terms of processing, phosphorylated by SRC and LCK. The phosphorylation SRC inhibits its ability to stimulate the Ras-GTPase activity, whereas phosphorylation by LCK does not display any effect on stimulation activity. As to expression, in placental villi, detected only in the trophoblast layer (cytotrophoblast and syncytiotrophoblast). Not detected in stromal, endothelial or Hofbauer cells (at protein level).

The protein resides in the cytoplasm. Its function is as follows. Inhibitory regulator of the Ras-cyclic AMP pathway. Stimulates the GTPase of normal but not oncogenic Ras p21; this stimulation may be further increased in the presence of NCK1. The polypeptide is Ras GTPase-activating protein 1 (RASA1) (Homo sapiens (Human)).